Reading from the N-terminus, the 309-residue chain is Olfactory receptor 7A17 (309 aa).

Topologically, residues 1–25 (MEPENDTGISEFVLLGLSEEPELQP) are extracellular. An N-linked (GlcNAc...) asparagine glycan is attached at asparagine 5. The chain crosses the membrane as a helical span at residues 26 to 46 (FLFGLFLSMYLVTVLGNLLII). Residues 47–54 (LATISDSH) are Cytoplasmic-facing. A helical membrane pass occupies residues 55 to 75 (LHTPMYFFLSNLSFADICFIS). The Extracellular segment spans residues 76-99 (TTIPKMLINIQTQSRVITYAGCIT). A disulfide bridge links cysteine 97 with cysteine 189. A helical transmembrane segment spans residues 100–120 (QMCFFVLFGGLDSLLLAVMAY). Topologically, residues 121-139 (DRFVAICHPLHYTVIMNPR) are cytoplasmic. The chain crosses the membrane as a helical span at residues 140-160 (LCGLLVLASWMIAALNSLSQS). At 161-197 (LMVLWLSFCTDLEIPHFFCELNQVIHLACSDTFLNDM) the chain is on the extracellular side. A helical membrane pass occupies residues 198–217 (GMYFAAGLLAGGPLVGILCS). At 218 to 237 (YSKIVSSIRAISSAQGKYKA) the chain is on the cytoplasmic side. Residues 238–258 (FSTCASHLSVVSLFCCTGLGV) form a helical membrane-spanning segment. The Extracellular segment spans residues 259–271 (YLTSAATHNSHTS). The helical transmembrane segment at 272 to 292 (ATASVMYTVATPMLNPFIYSL) threads the bilayer. Over 293–309 (RNKDIKRALKMSFRGKQ) the chain is Cytoplasmic.

The protein belongs to the G-protein coupled receptor 1 family.

Its subcellular location is the cell membrane. In terms of biological role, odorant receptor. The sequence is that of Olfactory receptor 7A17 (OR7A17) from Homo sapiens (Human).